We begin with the raw amino-acid sequence, 188 residues long: Adenylate kinase (188 aa).

An ATP-binding site is contributed by 11–16 (GAGKGT). Positions 31-60 (STGDIFRANIKDQTELGREAQRYTDAGNLV) are NMP. AMP contacts are provided by residues Thr-32, Arg-37, 58 to 60 (NLV), 86 to 89 (GYPR), and Gln-93. The tract at residues 127–137 (GRAQEQGRTDD) is LID. Arg-128 contributes to the ATP binding site. AMP contacts are provided by Arg-134 and Arg-145. Gly-173 is an ATP binding site.

Belongs to the adenylate kinase family. Monomer.

The protein resides in the cytoplasm. The enzyme catalyses AMP + ATP = 2 ADP. The protein operates within purine metabolism; AMP biosynthesis via salvage pathway; AMP from ADP: step 1/1. In terms of biological role, catalyzes the reversible transfer of the terminal phosphate group between ATP and AMP. Plays an important role in cellular energy homeostasis and in adenine nucleotide metabolism. This chain is Adenylate kinase, found in Kocuria rhizophila (strain ATCC 9341 / DSM 348 / NBRC 103217 / DC2201).